The following is a 309-amino-acid chain: Mas-related G-protein coupled receptor member E (309 aa).

At 1–21 (MSLRVHTHSPSTQGDMAFNLT) the chain is on the extracellular side. N19 carries an N-linked (GlcNAc...) asparagine glycan. Residues 22–42 (ILSLTELLSLGGLLGNGVALW) form a helical membrane-spanning segment. The Cytoplasmic segment spans residues 43-59 (LLNQNVYRNPFSIYLLD). A helical transmembrane segment spans residues 60–80 (VACADLIFLCCHMVAIIPELL). Residues 81 to 91 (QDQLNFPEFVH) lie on the Extracellular side of the membrane. The helical transmembrane segment at 92-112 (ISLIMLRFFCYIVGLSLLVAI) threads the bilayer. Residues 113–132 (STEQCLATLFPSGYLCRRPR) are Cytoplasmic-facing. Residues 133–153 (YLTTCVCAFIWVLCLLLDLLL) form a helical membrane-spanning segment. Residues 154 to 168 (SGACTQFFGAPSYHL) are Extracellular-facing. A helical transmembrane segment spans residues 169–189 (CGMLWLVVAVLLAALCCTMCV). Topologically, residues 190-212 (TSLLLLLRVERGPERHQPRGFPT) are cytoplasmic. Residues 213–233 (LVLLVILLFLFCGLPFGIFWL) traverse the membrane as a helical segment. Topologically, residues 234 to 247 (SKNLSWHTPLYFYH) are extracellular. Residue N236 is glycosylated (N-linked (GlcNAc...) asparagine). A helical membrane pass occupies residues 248–268 (FSFFMASVHSAAKPAIYFFLG). Over 269 to 309 (STPGQRFQEPLRLVLQRALGDEAELGAVREASQGGLVDMTV) the chain is Cytoplasmic.

This sequence belongs to the G-protein coupled receptor 1 family. Mas subfamily.

It localises to the cell membrane. In terms of biological role, orphan receptor. May regulate nociceptor function and/or development, including the sensation or modulation of pain. The protein is Mas-related G-protein coupled receptor member E (Mrgpre) of Rattus norvegicus (Rat).